Consider the following 426-residue polypeptide: Histidine--tRNA ligase (426 aa).

The protein belongs to the class-II aminoacyl-tRNA synthetase family. As to quaternary structure, homodimer.

The protein resides in the cytoplasm. It catalyses the reaction tRNA(His) + L-histidine + ATP = L-histidyl-tRNA(His) + AMP + diphosphate + H(+). This is Histidine--tRNA ligase from Chlorobium phaeovibrioides (strain DSM 265 / 1930) (Prosthecochloris vibrioformis (strain DSM 265)).